The chain runs to 283 residues: uncharacterized protein (283 aa).

A signal peptide spans 1-25 (MNKKRLLFRTPLDALFLLFGTALSA). The N-palmitoyl cysteine moiety is linked to residue C26. Residue C26 is the site of S-diacylglycerol cysteine attachment.

Belongs to the MG439/MG440 family.

It localises to the cell membrane. This is an uncharacterized protein from Mycoplasma pneumoniae (strain ATCC 29342 / M129 / Subtype 1) (Mycoplasmoides pneumoniae).